A 356-amino-acid chain; its full sequence is D-alanine--D-alanine ligase (356 aa).

The ATP-grasp domain occupies 134–339 (KQLFAHRGLP…YADLITKLIE (206 aa)). An ATP-binding site is contributed by 167–222 (KDKLEFPVFVKPANLGSSVGISKCNNEEELKSGIEEAFQFDRKLVIEQGIEAREIE). Mg(2+) contacts are provided by Asp293, Glu306, and Asn308.

It belongs to the D-alanine--D-alanine ligase family. The cofactor is Mg(2+). Mn(2+) is required as a cofactor.

The protein localises to the cytoplasm. The catalysed reaction is 2 D-alanine + ATP = D-alanyl-D-alanine + ADP + phosphate + H(+). The protein operates within cell wall biogenesis; peptidoglycan biosynthesis. In terms of biological role, cell wall formation. This Staphylococcus carnosus (strain TM300) protein is D-alanine--D-alanine ligase.